The chain runs to 350 residues: Protein-glutamate methylesterase/protein-glutamine glutaminase (350 aa).

Positions 5 to 122 (KVLCVDDSAL…RDGLIEYSEV (118 aa)) constitute a Response regulatory domain. D56 is modified (4-aspartylphosphate). Positions 152 to 346 (PFASSEKLVI…ERILTRLGDR (195 aa)) constitute a CheB-type methylesterase domain. Catalysis depends on residues S165, H191, and D288.

It belongs to the CheB family. Phosphorylated by CheA. Phosphorylation of the N-terminal regulatory domain activates the methylesterase activity.

The protein resides in the cytoplasm. It carries out the reaction [protein]-L-glutamate 5-O-methyl ester + H2O = L-glutamyl-[protein] + methanol + H(+). The enzyme catalyses L-glutaminyl-[protein] + H2O = L-glutamyl-[protein] + NH4(+). Involved in chemotaxis. Part of a chemotaxis signal transduction system that modulates chemotaxis in response to various stimuli. Catalyzes the demethylation of specific methylglutamate residues introduced into the chemoreceptors (methyl-accepting chemotaxis proteins or MCP) by CheR. Also mediates the irreversible deamidation of specific glutamine residues to glutamic acid. The chain is Protein-glutamate methylesterase/protein-glutamine glutaminase from Bordetella parapertussis (strain 12822 / ATCC BAA-587 / NCTC 13253).